Consider the following 968-residue polypeptide: Alanine--tRNA ligase, cytoplasmic (968 aa).

M1 is subject to N-acetylmethionine. ATP is bound by residues R77, H95, W176, and 214 to 216 (IWN). 2 residues coordinate L-alanine: N216 and D239. ATP is bound at residue G243. S399 and S555 each carry phosphoserine. Residues H605, H609, C723, and H727 each coordinate Zn(2+). The Nuclear localization signal motif lies at 750 to 763 (RRIVAVTGAEAQKA). The residue at position 876 (K876) is an N6-acetyllysine. At K943 the chain carries N6,N6,N6-trimethyllysine; alternate. K943 bears the N6,N6-dimethyllysine; alternate mark. K943 bears the N6-methyllysine; alternate mark.

Belongs to the class-II aminoacyl-tRNA synthetase family. As to quaternary structure, monomer. Interacts with ANKRD16; the interaction is direct. Zn(2+) serves as cofactor. Post-translationally, ISGylated. In terms of processing, methylation at 'Lys-943' by METTL21C.

It localises to the cytoplasm. The protein resides in the nucleus. It catalyses the reaction tRNA(Ala) + L-alanine + ATP = L-alanyl-tRNA(Ala) + AMP + diphosphate. It carries out the reaction (S)-lactate + ATP + H(+) = (S)-lactoyl-AMP + diphosphate. The enzyme catalyses (S)-lactoyl-AMP + L-lysyl-[protein] = N(6)-[(S)-lactoyl]-L-lysyl-[protein] + AMP + 2 H(+). The protein lactyltransferase activity is inhibited by beta-alanine. Functionally, catalyzes the attachment of alanine to tRNA(Ala) in a two-step reaction: alanine is first activated by ATP to form Ala-AMP and then transferred to the acceptor end of tRNA(Ala). Also edits incorrectly charged tRNA(Ala) via its editing domain. In presence of high levels of lactate, also acts as a protein lactyltransferase that mediates lactylation of lysine residues in target proteins, such as TEAD1, TP53/p53 and YAP1. Protein lactylation takes place in a two-step reaction: lactate is first activated by ATP to form lactate-AMP and then transferred to lysine residues of target proteins. Acts as an inhibitor of TP53/p53 activity by catalyzing lactylation of TP53/p53. Acts as a positive regulator of the Hippo pathway by mediating lactylation of TEAD1 and YAP1. The protein is Alanine--tRNA ligase, cytoplasmic of Mus musculus (Mouse).